We begin with the raw amino-acid sequence, 148 residues long: Small ribosomal subunit protein uS7m (148 aa).

This sequence belongs to the universal ribosomal protein uS7 family. Part of the small ribosomal subunit.

The protein resides in the mitochondrion. One of the primary rRNA binding proteins, it binds directly to 18S rRNA where it nucleates assembly of the head domain of the small subunit. This chain is Small ribosomal subunit protein uS7m (RPS7), found in Arabidopsis thaliana (Mouse-ear cress).